We begin with the raw amino-acid sequence, 149 residues long: Transcriptional regulator MraZ (149 aa).

SpoVT-AbrB domains are found at residues A9 to Q52 and A82 to R125.

The protein belongs to the MraZ family. Forms oligomers.

The protein localises to the cytoplasm. It is found in the nucleoid. This Treponema pallidum subsp. pallidum (strain SS14) protein is Transcriptional regulator MraZ.